The sequence spans 106 residues: Cytochrome c oxidase assembly protein COX16 homolog, mitochondrial (106 aa).

Residues 1-15 (MIAPAVLRALRKNKT) are Mitochondrial matrix-facing. Residues 16–33 (LRYGVPMLLLVVGGSFGL) form a helical membrane-spanning segment. Residues 34–106 (REFSQIRYDA…NPETLKPKTT (73 aa)) lie on the Mitochondrial intermembrane side of the membrane. Residues 81-106 (IRGPRPWEDPQLLQGRNPETLKPKTT) are disordered.

This sequence belongs to the COX16 family. In terms of assembly, associates with the MITRAC complex. Interacts with MT-CO2/COX; specifically interacts with newly synthesized MT-CO2/COX. Interacts with SCO1, SCO2 and COA6.

The protein localises to the mitochondrion inner membrane. Functionally, required for the assembly of the mitochondrial respiratory chain complex IV (CIV), also known as cytochrome c oxidase. Promotes the insertion of copper into the active site of cytochrome c oxidase subunit II (MT-CO2/COX2). Interacts specifically with newly synthesized MT-CO2/COX and its copper center-forming metallochaperones SCO1, SCO2 and COA6. Probably facilitates MT-CO2/COX2 association with the MITRAC assembly intermediate containing MT-CO1/COX1, thereby participating in merging the MT-CO1/COX1 and MT-CO2/COX2 assembly lines. The chain is Cytochrome c oxidase assembly protein COX16 homolog, mitochondrial from Mus musculus (Mouse).